Here is a 435-residue protein sequence, read N- to C-terminus: Membrane-bound ghrelin O-acyltransferase MBOAT4 (435 aa).

Residues 1 to 5 lie on the Lumenal side of the membrane; that stretch reads MDWLQ. The helical transmembrane segment at 6–26 threads the bilayer; sequence FFFLHPVSLYQGAAFPFALLF. The Cytoplasmic portion of the chain corresponds to 27 to 40; that stretch reads NYLCITESFPTRAR. A helical transmembrane segment spans residues 41–56; sequence YLFLLAGGGVLALAAM. Over 57 to 59 the chain is Lumenal; that stretch reads GPY. The chain crosses the membrane as a helical span at residues 60–76; the sequence is ALLIFIPALCAVAMISS. Topologically, residues 77 to 82 are cytoplasmic; sequence LSPQEV. Residues 83–101 traverse the membrane as a helical segment; sequence HGLTFFFQMGWQTLCHLGL. Topologically, residues 102–120 are lumenal; that stretch reads HYKEYYLCEPPPVRFYITL. A helical membrane pass occupies residues 121-136; sequence SSLMLLTQRVTSLSLD. The Cytoplasmic portion of the chain corresponds to 137–206; it reads ISEGKVEAAW…YPSISFWALT (70 aa). Residues 207–227 traverse the membrane as a helical segment; that stretch reads WRGLQILGLECLKVALRRVVS. Residues 228–240 lie on the Lumenal side of the membrane; that stretch reads AGAGLDDCQRLEC. The chain crosses the membrane as a helical span at residues 241–261; sequence IYIMWSTAGLFKLTYYSHWIL. The Cytoplasmic portion of the chain corresponds to 262 to 324; that stretch reads DDSLLHAAGF…KRLVFQRSRR (63 aa). Residues N307 and H338 contribute to the active site. Residues 325–338 traverse the membrane as a helical segment; sequence WPVLQTFAFSAWWH. Topologically, residues 339–340 are lumenal; the sequence is GL. Residues 341–357 traverse the membrane as a helical segment; it reads HPGQVFGFLCWSVMVKA. Residues 358–376 are Cytoplasmic-facing; the sequence is DYLIHTFANGCIRSWPLRL. The chain crosses the membrane as a helical span at residues 377 to 397; the sequence is LYRSLTWAHTQIIIAYVMLAV. Residues 398–407 lie on the Lumenal side of the membrane; sequence EGRSFSSLCR. The helical transmembrane segment at 408-428 threads the bilayer; it reads LCCSYNSIFPVTYCLLLFLLA. Topologically, residues 429–435 are cytoplasmic; the sequence is RRKHKCN.

The protein belongs to the membrane-bound acyltransferase family. In terms of assembly, monomer. In terms of processing, not glycosylated.

It is found in the endoplasmic reticulum membrane. It catalyses the reaction octanoyl-CoA + L-seryl-[protein] = O-octanoyl-L-seryl-[protein] + CoA. The catalysed reaction is decanoyl-CoA + L-seryl-[protein] = O-decanoyl-L-seryl-[protein] + CoA. It carries out the reaction L-seryl-[protein] + acetyl-CoA = O-acetyl-L-seryl-[protein] + CoA. The enzyme catalyses L-seryl-[protein] + butanoyl-CoA = O-butanoyl-L-seryl-[protein] + CoA. It catalyses the reaction pentanoyl-CoA + L-seryl-[protein] = O-pentanoyl-L-seryl-[protein] + CoA. The catalysed reaction is hexanoyl-CoA + L-seryl-[protein] = O-hexanoyl-L-seryl-[protein] + CoA. It carries out the reaction heptanoyl-CoA + L-seryl-[protein] = O-heptanoyl-L-seryl-[protein] + CoA. The enzyme catalyses nonanoyl-CoA + L-seryl-[protein] = O-nonanoyl-L-seryl-[protein] + CoA. It catalyses the reaction L-seryl-[protein] + dodecanoyl-CoA = O-dodecanoyl-L-seryl-[protein] + CoA. The catalysed reaction is L-seryl-[protein] + tetradecanoyl-CoA = O-tetradecanoyl-L-seryl-[protein] + CoA. It carries out the reaction a fatty acyl-CoA + L-seryl-[protein] = O-fatty acyl-L-seryl-[protein] + CoA. Its function is as follows. Catalyzes ghrelin acylation at 'Ser-3' using preferentially octanoyl-CoA, hexanoyl-CoA and decanoyl-CoA as acyl-CoA donors leading to ghrelin activity. In vitro uses also acyl-CoA donors of different lengths from short-chain (C2) to long-chain fatty acids (C16) knowing that acyl-CoA donors from butanoyl-CoA (C4) to dodecanoyl-CoA (C12) are more efficient compared to longer acyl-CoA donors, such as myristoyl-CoA (C14) and palmitoyl-CoA (C16) that are not efficient. This Rattus norvegicus (Rat) protein is Membrane-bound ghrelin O-acyltransferase MBOAT4.